The sequence spans 996 residues: Filament-like plant protein 5 (996 aa).

Positions 1–20 (MEGRGWPWKRKSSDKATTEK) are disordered. 4 coiled-coil regions span residues 59-94 (THMSRMEDQVKLFEVQVKDLKEKLTLAHSEINTKES), 133-248 (TAED…KYDL), 280-301 (VKKIAKLEAECHRLRGLLRKKL), and 359-387 (LTRRTLEMEEEIQTLKEHLSARNNELQVS). Disordered regions lie at residues 409-482 (NNDK…SSSR) and 496-534 (VGSDPDGANSASKSSNSVCSRRSVEKQSSSKSSEPDEDT). Residues 417–428 (SNSRNLSESLSS) show a composition bias toward low complexity. A compositionally biased stretch (polar residues) spans 471–482 (VNGSSKPRSSSR). Residues 503-527 (ANSASKSSNSVCSRRSVEKQSSSKS) are compositionally biased toward low complexity. 3 coiled-coil regions span residues 601-622 (QNSEKEQKNTKQQDLEAAVANI), 737-841 (DSSC…FTTE), and 876-906 (NQEKDIVSATEKLAACQETIHLLSQQLQSLQ). Residues 962–996 (IMKSSSVSSSSKEDNEKHTRGLGRFFSSKSKNSAR) form a disordered region.

This sequence belongs to the FPP family. In terms of assembly, interacts with WPP/MAF proteins.

The polypeptide is Filament-like plant protein 5 (FPP5) (Arabidopsis thaliana (Mouse-ear cress)).